The following is a 314-amino-acid chain: DDRGK domain-containing protein 1 (314 aa).

A helical transmembrane segment spans residues 1–28 (MVAPVWYLVAAALLVGFILFLTRSRGRA). The mediates interaction with CDK5RAP3 stretch occupies residues 1-114 (MVAPVWYLVA…VEKPAETHLS (114 aa)). The Cytoplasmic segment spans residues 29–314 (ASAGQEPLHN…GRESPAQAPA (286 aa)). 2 disordered regions span residues 31 to 75 (AGQE…SRLQ) and 100 to 186 (QEEE…QREH). Phosphoserine occurs at positions 72 and 114. Residues 118 to 216 (GAKKLRKLEE…MTEEQSQSFL (99 aa)) are mediates interaction with TRIP4. The span at 124–186 (KLEEKQARKA…AREEQAQREH (63 aa)) shows a compositional bias: basic and acidic residues. A UFM1-interacting motif (UFIM) motif is present at residues 195-209 (AFVVEEEGVGETMTE). The tract at residues 216-314 (LTEFINYIKQ…GRESPAQAPA (99 aa)) is mediates interaction with UFL1. The PCI domain maps to 229–273 (VLLEDLASQVGLRTQDTINRIQDLLAEGTITGVIDDRGKFIYITP). Residue Lys267 forms a Glycyl lysine isopeptide (Lys-Gly) (interchain with G-Cter in UFM1) linkage.

Belongs to the DDRGK1 family. Component of the UFM1 ribosome E3 ligase (UREL) complex, composed of UFL1, DDRGK1 and CDK5RAP3. Interacts with (unphosphorylated) ERN1/IRE1-alpha; interaction is dependent on UFM1 and takes place in response to endoplasmic reticulum stress, regulating ERN1/IRE1-alpha stability. Interacts with NFKBIA. Interacts with SOX9. Ubiquitinated. Ubiquitination probably triggers proteasomal degradation and is negatively regulated by UFL1, the enzyme involved in the ufmylation of DDRGK1. Post-translationally, ufmylated; conjugated to ubiquitin-like protein UFM1, probably at Lys-267 by UFL1. The relevance of ufmylation is however unclear: as DDRGK1 acts as a substrate adapters for ufmylation, it is uncertain whether ufmylation is a collateral effect of ufmylation process or is required to regulate its activity. Widely expressed (at protein level). In the brain, highest levels in medulla oblongata, followed by cerebral cortex, cerebellum and frontal lobe.

It localises to the endoplasmic reticulum membrane. Functionally, component of the UFM1 ribosome E3 ligase (UREL) complex, a multiprotein complex that catalyzes ufmylation of endoplasmic reticulum-docked proteins. The UREL complex plays a key role in ribosome recycling by mediating mono-ufmylation of the RPL26/uL24 subunit of the 60S ribosome following ribosome dissociation: ufmylation weakens the junction between post-termination 60S subunits and SEC61 translocons, promoting release and recycling of the large ribosomal subunit from the endoplasmic reticulum membrane. Ufmylation of RPL26/uL24 and subsequent 60S ribosome recycling either take place after normal termination of translation or after ribosome stalling during cotranslational translocation at the endoplasmic reticulum. Within the UREL complex, DDRGK1 tethers the complex to the endoplasmic reticulum membrane to restrict its activity to endoplasmic reticulum-docked ribosomes and acts as an ufmylation 'reader': following RPL26/uL24 ufmylation, DDRGK1 specifically binds to ufmylated RPL26/uL24 via its UFIM motif, resulting in stable association between the 60S ribosome and the UREL complex, followed by dissociation of the 60S ribosome subunit from the endoplasmic reticulum membrane. The UREL complex is also involved in reticulophagy in response to endoplasmic reticulum stress by promoting ufmylation of proteins such as CYB5R3 and RPN1, thereby promoting lysosomal degradation of ufmylated proteins. Ufmylation-dependent reticulophagy inhibits the unfolded protein response (UPR) by regulating ERN1/IRE1-alpha stability. Acts as a regulator of immunity by promoting differentiation of B-cells into plasma cells: acts by promoting expansion of the endoplasmic reticulum and regulating the unfolded protein response (UPR). May also be required for TRIP4 ufmylation. May play a role in NF-kappa-B-mediated transcription through regulation of the phosphorylation and the degradation of NFKBIA, the inhibitor of NF-kappa-B. Plays a role in cartilage development through SOX9, inhibiting the ubiquitin-mediated proteasomal degradation of this transcriptional regulator. Required for stabilization and ufmylation of ATG9A. This Homo sapiens (Human) protein is DDRGK domain-containing protein 1.